Here is a 116-residue protein sequence, read N- to C-terminus: uncharacterized protein (116 aa).

Belongs to the BolA/IbaG family.

It localises to the mitochondrion. This is an uncharacterized protein from Schizosaccharomyces pombe (strain 972 / ATCC 24843) (Fission yeast).